We begin with the raw amino-acid sequence, 456 residues long: Exodeoxyribonuclease 7 large subunit (456 aa).

The segment at 1–103 (MLPSQSPAIF…DYQIIVESMQ (103 aa)) is binds ssDNA, also required to bind the small subunit.

The protein belongs to the XseA family. Heterooligomer composed of two different subunits with an approximate ratio of 4:1 for small to large subunit. Also estimated to have a 6:1 ration for small to large subunits. The cofactor is Does not require a metal cofactor..

The protein resides in the cytoplasm. It catalyses the reaction Exonucleolytic cleavage in either 5'- to 3'- or 3'- to 5'-direction to yield nucleoside 5'-phosphates.. In terms of biological role, bidirectionally degrades single-stranded DNA into large acid-insoluble oligonucleotides, which are then degraded further into small acid-soluble oligonucleotides. It can degrade 3' or 5' ss regions extending from the termini of duplex DNA molecules and displaced ss regions. It can also excise thymine dimers in vitro. ssDNA-binding requires both subunits. Required for production of the mature 5'-end of retron Ec78 or Ec83 msDNA. Overproduction of this subunit in the absence of an equivalent quantity of the small subunit is toxic, causing cell elongation and chromosome fragmentation or loss; its toxicity is mostly suppressed by RecA. The sequence is that of Exodeoxyribonuclease 7 large subunit from Escherichia coli (strain K12).